A 247-amino-acid polypeptide reads, in one-letter code: ATP synthase delta chain, chloroplastic (247 aa).

A chloroplast-targeting transit peptide spans 1–60 (MAALRLASFTLRPAAAAAASASSGATPAAPRSASFARAARGLPSLRLAPPRRRGDLVRPR).

The protein belongs to the ATPase delta chain family. In terms of assembly, F-type ATPases have 2 components, CF(1) - the catalytic core - and CF(0) - the membrane proton channel. CF(1) has five subunits: alpha(3), beta(3), gamma(1), delta(1), epsilon(1). CF(0) has three main subunits: a, b and c.

It localises to the plastid. It is found in the chloroplast thylakoid membrane. Functionally, this protein seems to be part of the stalk that links CF(0) to CF(1). It either transmits conformational changes from CF(0) into CF(1) or is implicated in proton conduction. The sequence is that of ATP synthase delta chain, chloroplastic (ATPD) from Sorghum bicolor (Sorghum).